Here is a 773-residue protein sequence, read N- to C-terminus: Cadherin-5 (773 aa).

Positions 1-18 (MKKLILLFSLFLAPAFSY) are cleaved as a signal peptide. Positions 19–40 (KENQKINQNFSSNNTSHKRLKR) are excised as a propeptide. N-linked (GlcNAc...) asparagine glycosylation is found at Asn-27, Asn-31, and Asn-32. 5 Cadherin domains span residues 39 to 144 (KRDW…APIF), 145 to 251 (VQKI…FPVF), 252 to 366 (KHPS…PPVF), 367 to 474 (TKLS…APEL), and 474 to 582 (LVYP…DFTF). The Extracellular segment spans residues 41–595 (DWIWNRMHIR…RAKQVGVSVQ (555 aa)). Residues Glu-51, Glu-52, Asp-102, and Glu-104 each contribute to the Ca(2+) site. N-linked (GlcNAc...) asparagine glycosylation is present at Asn-121. Ca(2+) contacts are provided by Asp-136, Ile-137, Asn-138, Asp-139, and Asn-140. N-linked (GlcNAc...) asparagine glycosylation occurs at Asn-150. Positions 170, 172, 179, and 224 each coordinate Ca(2+). N-linked (GlcNAc...) asparagine glycosylation is found at Asn-263, Asn-437, Asn-519, and Asn-531. A helical membrane pass occupies residues 596-617 (ALVAIFICIFTIIAVIALLILL). The Cytoplasmic segment spans residues 618–773 (RKRHKKDLSG…GSEPNEDFVY (156 aa)).

In terms of processing, N-glycosylated. Post-translationally, O-glycosylated.

It is found in the cell junction. It localises to the adherens junction. The protein resides in the cell membrane. The protein localises to the cytoplasm. Its function is as follows. Cadherins are calcium-dependent cell adhesion proteins. They preferentially interact with themselves in a homophilic manner in connecting cells; cadherins may thus contribute to the sorting of heterogeneous cell types. This cadherin may play a important role in endothelial cell biology through control of the cohesion and organization of the intercellular junctions. Plays a role in coupling actin fibers to cell junctions in endothelial cells. Associates with CTNND1/p120-catenin to control CADH5 endocytosis. This Gallus gallus (Chicken) protein is Cadherin-5.